Reading from the N-terminus, the 435-residue chain is Homogentisate 1,2-dioxygenase (435 aa).

Residue His289 is the Proton acceptor of the active site. His332 and Glu338 together coordinate Fe cation. Residues Tyr347 and His368 each coordinate homogentisate. His368 serves as a coordination point for Fe cation.

Belongs to the homogentisate dioxygenase family. Hexamer; dimer of trimers. It depends on Fe cation as a cofactor.

It carries out the reaction homogentisate + O2 = 4-maleylacetoacetate + H(+). It participates in amino-acid degradation; L-phenylalanine degradation; acetoacetate and fumarate from L-phenylalanine: step 4/6. In terms of biological role, involved in the catabolism of homogentisate (2,5-dihydroxyphenylacetate or 2,5-OH-PhAc), a central intermediate in the degradation of phenylalanine and tyrosine. Catalyzes the oxidative ring cleavage of the aromatic ring of homogentisate to yield maleylacetoacetate. The protein is Homogentisate 1,2-dioxygenase of Pseudomonas savastanoi pv. phaseolicola (strain 1448A / Race 6) (Pseudomonas syringae pv. phaseolicola (strain 1448A / Race 6)).